A 301-amino-acid polypeptide reads, in one-letter code: UDP-N-acetylenolpyruvoylglucosamine reductase (301 aa).

The FAD-binding PCMH-type domain occupies 29–195 (KIGGPADVFV…VEAIFSLTRG (167 aa)). Arg-174 is a catalytic residue. The active-site Proton donor is Ser-224. Glu-294 is a catalytic residue.

The protein belongs to the MurB family. FAD serves as cofactor.

The protein localises to the cytoplasm. The catalysed reaction is UDP-N-acetyl-alpha-D-muramate + NADP(+) = UDP-N-acetyl-3-O-(1-carboxyvinyl)-alpha-D-glucosamine + NADPH + H(+). Its pathway is cell wall biogenesis; peptidoglycan biosynthesis. In terms of biological role, cell wall formation. This Halalkalibacterium halodurans (strain ATCC BAA-125 / DSM 18197 / FERM 7344 / JCM 9153 / C-125) (Bacillus halodurans) protein is UDP-N-acetylenolpyruvoylglucosamine reductase.